The following is a 272-amino-acid chain: Shikimate dehydrogenase (NADP(+)) (272 aa).

Shikimate is bound by residues 14-16 (SKS) and Thr61. The active-site Proton acceptor is the Lys65. Glu77 lines the NADP(+) pocket. Shikimate contacts are provided by Asn86 and Asp102. NADP(+) is bound by residues 126-130 (GAGGA), 149-154 (NRTASR), and Met213. Tyr215 lines the shikimate pocket. Gly237 lines the NADP(+) pocket.

It belongs to the shikimate dehydrogenase family. In terms of assembly, homodimer.

It carries out the reaction shikimate + NADP(+) = 3-dehydroshikimate + NADPH + H(+). The protein operates within metabolic intermediate biosynthesis; chorismate biosynthesis; chorismate from D-erythrose 4-phosphate and phosphoenolpyruvate: step 4/7. Functionally, involved in the biosynthesis of the chorismate, which leads to the biosynthesis of aromatic amino acids. Catalyzes the reversible NADPH linked reduction of 3-dehydroshikimate (DHSA) to yield shikimate (SA). The chain is Shikimate dehydrogenase (NADP(+)) from Salmonella paratyphi A (strain ATCC 9150 / SARB42).